The chain runs to 474 residues: UDP-N-acetylmuramate--L-alanine ligase (474 aa).

An ATP-binding site is contributed by 119-125 (GTHGKTT).

Belongs to the MurCDEF family.

The protein resides in the cytoplasm. The enzyme catalyses UDP-N-acetyl-alpha-D-muramate + L-alanine + ATP = UDP-N-acetyl-alpha-D-muramoyl-L-alanine + ADP + phosphate + H(+). The protein operates within cell wall biogenesis; peptidoglycan biosynthesis. Cell wall formation. This chain is UDP-N-acetylmuramate--L-alanine ligase, found in Jannaschia sp. (strain CCS1).